The chain runs to 517 residues: Phosphatase and actin regulator 3 (517 aa).

Residues 1–24 (MDQTPPARSEPLVSGIRTPPVRRN) form a disordered region. Thr-29 is subject to Phosphothreonine. Disordered regions lie at residues 41–247 (KKKN…RPLP) and 260–320 (ATKH…SEEN). One copy of the RPEL 1 repeat lies at 52 to 77 (SALEKKMAGRQGREELIKQGLLEMME). Residues 54–68 (LEKKMAGRQGREELI) show a composition bias toward basic and acidic residues. Composition is skewed to polar residues over residues 92–129 (QPAQ…QDEL) and 157–172 (LPTT…SGSL). The span at 187–198 (PSPPLLPTPPPK) shows a compositional bias: pro residues. Ser-188 is subject to Phosphoserine. The residue at position 194 (Thr-194) is a Phosphothreonine. Over residues 260-300 (ATKHRQDSFQGRECRGSPKKRMDVRLSRTSSMERGKERDEA) the composition is skewed to basic and acidic residues. RPEL repeat units lie at residues 359–384 (ELLA…PRRT), 397–422 (MKLS…KQRN), and 435–460 (QRLT…IRFS). The stretch at 408 to 444 (AVEELERRNILKQRNDQTEQEERREIKQRLTRKLNQR) forms a coiled coil.

It belongs to the phosphatase and actin regulator family. In terms of assembly, binds actin and PPP1CA; thus inhibiting the protein phosphatase 1 (PP1) activity. As to expression, diffusely expressed throughout the brain cortex, with highest levels in the cortex and the hippocampus and lower levels in the striatum and thalamus.

It localises to the nucleus matrix. This Rattus norvegicus (Rat) protein is Phosphatase and actin regulator 3 (Phactr3).